Consider the following 68-residue polypeptide: MPKGKNPRVTVILECTSCVRNGADKKKESPGISRYITQKNRHNTPGRLELKKFCPYCYKHTIHGEIKK.

The protein belongs to the bacterial ribosomal protein bL33 family.

Its subcellular location is the plastid. It is found in the chloroplast. This is Large ribosomal subunit protein bL33c from Nymphaea alba (White water-lily).